Here is a 289-residue protein sequence, read N- to C-terminus: Putative 2-aminoethylphosphonate transport system permease protein PhnU (289 aa).

6 consecutive transmembrane segments (helical) span residues 19–39 (WLLL…SLIV), 76–96 (FFAT…LVFI), 111–131 (FIAL…GSAG), 150–170 (FLYS…PLVM), 202–222 (VIFP…LLLT), and 254–274 (YTVA…LFSL). One can recognise an ABC transmembrane type-1 domain in the interval 68 to 275 (LLNTLQIAFF…VLSLGLFSLY (208 aa)).

It belongs to the binding-protein-dependent transport system permease family.

The protein resides in the cell inner membrane. In terms of biological role, probably part of the PhnSTUV complex (TC 3.A.1.11.5) involved in 2-aminoethylphosphonate import. Probably responsible for the translocation of the substrate across the membrane. The chain is Putative 2-aminoethylphosphonate transport system permease protein PhnU (phnU) from Salmonella typhi.